Here is a 361-residue protein sequence, read N- to C-terminus: UDP-N-acetylglucosamine--N-acetylmuramyl-(pentapeptide) pyrophosphoryl-undecaprenol N-acetylglucosamine transferase (361 aa).

UDP-N-acetyl-alpha-D-glucosamine is bound by residues 12 to 14, Asn124, Arg163, Ser189, Ile241, 260 to 265, and Gln286; these read TGG and ALTVSE.

It belongs to the glycosyltransferase 28 family. MurG subfamily.

The protein resides in the cell inner membrane. The enzyme catalyses di-trans,octa-cis-undecaprenyl diphospho-N-acetyl-alpha-D-muramoyl-L-alanyl-D-glutamyl-meso-2,6-diaminopimeloyl-D-alanyl-D-alanine + UDP-N-acetyl-alpha-D-glucosamine = di-trans,octa-cis-undecaprenyl diphospho-[N-acetyl-alpha-D-glucosaminyl-(1-&gt;4)]-N-acetyl-alpha-D-muramoyl-L-alanyl-D-glutamyl-meso-2,6-diaminopimeloyl-D-alanyl-D-alanine + UDP + H(+). It functions in the pathway cell wall biogenesis; peptidoglycan biosynthesis. Its function is as follows. Cell wall formation. Catalyzes the transfer of a GlcNAc subunit on undecaprenyl-pyrophosphoryl-MurNAc-pentapeptide (lipid intermediate I) to form undecaprenyl-pyrophosphoryl-MurNAc-(pentapeptide)GlcNAc (lipid intermediate II). The chain is UDP-N-acetylglucosamine--N-acetylmuramyl-(pentapeptide) pyrophosphoryl-undecaprenol N-acetylglucosamine transferase from Aeromonas hydrophila subsp. hydrophila (strain ATCC 7966 / DSM 30187 / BCRC 13018 / CCUG 14551 / JCM 1027 / KCTC 2358 / NCIMB 9240 / NCTC 8049).